A 473-amino-acid chain; its full sequence is Cell division protein FtsP (473 aa).

A signal peptide (tat-type signal) is located at residues 1-27 (MSFSRRQFLQASGLAVCLGSLSSSVRA).

Belongs to the FtsP family. Post-translationally, predicted to be exported by the Tat system. The position of the signal peptide cleavage has not been experimentally proven.

It is found in the periplasm. Functionally, cell division protein that is required for growth during stress conditions. May be involved in protecting or stabilizing the divisomal assembly under conditions of stress. This Proteus mirabilis (strain HI4320) protein is Cell division protein FtsP.